A 371-amino-acid chain; its full sequence is Cytochrome b (371 aa).

4 helical membrane passes run 25 to 45 (FGSM…FLAI), 69 to 90 (WIMQ…YIHI), 105 to 125 (WLTG…GYVL), and 170 to 190 (FFAL…IHII). The heme b site is built by His-75 and His-89. 2 residues coordinate heme b: His-174 and His-188. His-193 is a binding site for a ubiquinone. A run of 4 helical transmembrane segments spans residues 218–238 (YKDL…LSFM), 280–300 (LGGA…PFTH), 312–332 (LAQT…WAAT), and 339–358 (FLLI…IMNP).

Belongs to the cytochrome b family. In terms of assembly, the cytochrome bc1 complex contains 3 respiratory subunits (MT-CYB, CYC1 and UQCRFS1), 2 core proteins (UQCRC1 and UQCRC2) and probably 6 low-molecular weight proteins. Requires heme b as cofactor.

It is found in the mitochondrion inner membrane. Its function is as follows. Component of the ubiquinol-cytochrome c reductase complex (complex III or cytochrome b-c1 complex) that is part of the mitochondrial respiratory chain. The b-c1 complex mediates electron transfer from ubiquinol to cytochrome c. Contributes to the generation of a proton gradient across the mitochondrial membrane that is then used for ATP synthesis. The sequence is that of Cytochrome b (MT-CYB) from Laticauda colubrina (Yellow-lipped sea krait).